The following is a 724-amino-acid chain: Probable metal-nicotianamine transporter YSL13 (724 aa).

The tract at residues 1–54 is disordered; that stretch reads MATVPTPSEAHGGATPTAADVEMVEASELRRRGKPSGDRATGPSRDGAAAAAEE. 14 consecutive transmembrane segments (helical) span residues 80 to 100, 103 to 123, 148 to 168, 190 to 210, 252 to 272, 310 to 330, 355 to 375, 423 to 443, 455 to 475, 487 to 507, 541 to 561, 603 to 623, 640 to 660, and 675 to 695; these read AFVVSFFLVIMFSVIVMKLNL, GIIPSLNVSAGLLGFFFVRLW, CVVAGYDIAFSGGFGNYILSM, LGWIIGFLFLVSFIGLFGLVP, LGIFFILSFFWGFFQWFYTAT, IVNVSVLLGGILSWGIMWPLI, VFIAIALILGDGLYNFLKMII, IPWYVAYGGYAVVAAISIGTV, ILVAYIVAPILAFCNAYGTGL, LAIFAFGAWTGASHGGVLAGL, FVSQVIGTAMGCVIAPCVFWL, LNLCYAFFAAAIVVNLIRDLV, FYIGSYFAIDMFIGTVILFVW, and VASGMICGDGIWVLPQSVLAL.

Belongs to the YSL (TC 2.A.67.2) family. As to expression, expressed in leaves and at low levels in root cortex.

The protein localises to the membrane. In terms of biological role, may be involved in the transport of nicotianamine-chelated metals. The polypeptide is Probable metal-nicotianamine transporter YSL13 (YSL13) (Oryza sativa subsp. japonica (Rice)).